The following is a 337-amino-acid chain: Heme A synthase (337 aa).

Helical transmembrane passes span 6–26 (ITKW…IGGI), 87–107 (FIHR…LIYF), 119–139 (LPYI…WYMV), 154–174 (LAFH…QLIK), and 192–212 (LIFS…GALV). Residue histidine 256 participates in heme binding. 3 consecutive transmembrane segments (helical) span residues 258-278 (LGGY…LKIE), 285-305 (IAYF…ITLL), and 308-328 (VPII…SIII). Residue histidine 316 coordinates heme.

This sequence belongs to the COX15/CtaA family. Type 2 subfamily. In terms of assembly, interacts with CtaB. Heme b serves as cofactor.

The protein resides in the cell membrane. It carries out the reaction Fe(II)-heme o + 2 A + H2O = Fe(II)-heme a + 2 AH2. It participates in porphyrin-containing compound metabolism; heme A biosynthesis; heme A from heme O: step 1/1. Its function is as follows. Catalyzes the conversion of heme O to heme A by two successive hydroxylations of the methyl group at C8. The first hydroxylation forms heme I, the second hydroxylation results in an unstable dihydroxymethyl group, which spontaneously dehydrates, resulting in the formyl group of heme A. This is Heme A synthase from Rickettsia massiliae (strain Mtu5).